The sequence spans 333 residues: Tetraacyldisaccharide 4'-kinase (333 aa).

ATP is bound at residue 55–62 (TAGGNGKT).

The protein belongs to the LpxK family.

It carries out the reaction a lipid A disaccharide + ATP = a lipid IVA + ADP + H(+). It participates in glycolipid biosynthesis; lipid IV(A) biosynthesis; lipid IV(A) from (3R)-3-hydroxytetradecanoyl-[acyl-carrier-protein] and UDP-N-acetyl-alpha-D-glucosamine: step 6/6. Its function is as follows. Transfers the gamma-phosphate of ATP to the 4'-position of a tetraacyldisaccharide 1-phosphate intermediate (termed DS-1-P) to form tetraacyldisaccharide 1,4'-bis-phosphate (lipid IVA). The sequence is that of Tetraacyldisaccharide 4'-kinase from Pectobacterium atrosepticum (strain SCRI 1043 / ATCC BAA-672) (Erwinia carotovora subsp. atroseptica).